We begin with the raw amino-acid sequence, 292 residues long: uncharacterized protein (292 aa).

10 consecutive transmembrane segments (helical) span residues 6-26 (LGIISVTLIWGYTWVAMKVGI), 32-52 (LLFSGLRLFIGAVPLFLILFI), 68-88 (IIMSLLMGLGYMGILTYGMQF), 94-114 (TSVLVYTMPIFVTVISHFSLN), 123-143 (MGLVCGLFGLLFIFGKEMLNI), 147-167 (ALFGELCVLVAALSWGIANVF), 182-202 (AWHLMMGAVMLLVFSFIFEAV), 214-234 (SLLFNGLLSTGFTFVVWFWVL), 242-262 (ASMALMFVPVLALFFGWLQLH), and 265-285 (ITINIILGALLICCGIFMNTF). 2 consecutive EamA domains span residues 13 to 137 (LIWG…FIFG) and 159 to 285 (LSWG…MNTF).

It belongs to the EamA transporter family.

The protein resides in the cell membrane. This is an uncharacterized protein from Bacillus subtilis (strain 168).